We begin with the raw amino-acid sequence, 89 residues long: Exodeoxyribonuclease 7 small subunit (89 aa).

Residues 1–23 (MRPWRCVSMAKAPAAPSSTQPDP) form a disordered region.

The protein belongs to the XseB family. Heterooligomer composed of large and small subunits.

The protein localises to the cytoplasm. It catalyses the reaction Exonucleolytic cleavage in either 5'- to 3'- or 3'- to 5'-direction to yield nucleoside 5'-phosphates.. In terms of biological role, bidirectionally degrades single-stranded DNA into large acid-insoluble oligonucleotides, which are then degraded further into small acid-soluble oligonucleotides. This chain is Exodeoxyribonuclease 7 small subunit, found in Acidovorax sp. (strain JS42).